The primary structure comprises 919 residues: Periodic tryptophan protein 2 homolog (919 aa).

5 WD repeats span residues 12-50 (GTVY…SNTL), 53-93 (ATKY…LHHF), 94-132 (HFKG…REFN), 142-181 (GPYD…NLIY), and 186-225 (GHKD…EGLR). Position 55 is an N6-acetyllysine (lysine 55). Residues 238–266 (QREKEEEEEDEEEGDRETTIRGKTTPAEQ) are disordered. Residues 242 to 252 (EEEEEDEEEGD) are compositionally biased toward acidic residues. WD repeat units follow at residues 286-325 (GDFN…LIHS), 328-368 (ISDQ…YVLK), 371-410 (GHFN…CFVT), 413-452 (EHSS…NFRT), 456-498 (PRPT…DVLS), 499-538 (GHEG…RTKE), 541-580 (TLTS…QVGS), 603-642 (AKGK…LVKR), and 700-740 (KPEI…DPFE). Positions 885-919 (TLEPVDTEEDSDASDEDSLHLLRAAGEEEEEEMLI) are disordered. Positions 889–900 (VDTEEDSDASDE) are enriched in acidic residues. Threonine 891 bears the Phosphothreonine mark. 3 positions are modified to phosphoserine: serine 895, serine 898, and serine 902.

This sequence belongs to the WD repeat PWP2 family. As to quaternary structure, part of the small subunit (SSU) processome, composed of more than 70 proteins and the RNA chaperone small nucleolar RNA (snoRNA) U3.

It is found in the nucleus. The protein resides in the nucleolus. Functionally, part of the small subunit (SSU) processome, first precursor of the small eukaryotic ribosomal subunit. During the assembly of the SSU processome in the nucleolus, many ribosome biogenesis factors, an RNA chaperone and ribosomal proteins associate with the nascent pre-rRNA and work in concert to generate RNA folding, modifications, rearrangements and cleavage as well as targeted degradation of pre-ribosomal RNA by the RNA exosome. The chain is Periodic tryptophan protein 2 homolog (Pwp2) from Mus musculus (Mouse).